The chain runs to 687 residues: Polyphosphate kinase (687 aa).

Residue N45 participates in ATP binding. The Mg(2+) site is built by R375 and R405. Catalysis depends on H435, which acts as the Phosphohistidine intermediate. Y472, R568, and H596 together coordinate ATP.

Belongs to the polyphosphate kinase 1 (PPK1) family. Mg(2+) is required as a cofactor. An intermediate of this reaction is the autophosphorylated ppk in which a phosphate is covalently linked to a histidine residue through a N-P bond.

The enzyme catalyses [phosphate](n) + ATP = [phosphate](n+1) + ADP. Catalyzes the reversible transfer of the terminal phosphate of ATP to form a long-chain polyphosphate (polyP). The sequence is that of Polyphosphate kinase from Paraburkholderia phytofirmans (strain DSM 17436 / LMG 22146 / PsJN) (Burkholderia phytofirmans).